Consider the following 221-residue polypeptide: Putative hemin import ATP-binding protein HrtA (221 aa).

Residues 3–221 (LVVKDIVKNF…IELEDGKITD (219 aa)) enclose the ABC transporter domain. ATP is bound at residue 39-46 (GASGSGKT).

This sequence belongs to the ABC transporter superfamily. HrtA family. As to quaternary structure, the complex is composed of two ATP-binding proteins (HrtA), two transmembrane proteins (HrtB) and a solute-binding protein.

It is found in the cell membrane. Its function is as follows. Part of the ABC transporter complex hrt involved in hemin import. Responsible for energy coupling to the transport system. In Staphylococcus aureus (strain MRSA252), this protein is Putative hemin import ATP-binding protein HrtA (hrtA).